A 358-amino-acid chain; its full sequence is Dynein axonemal assembly factor 10 (358 aa).

WD repeat units follow at residues 63 to 105 (EKKH…QPVF), 109 to 154 (AHAS…APVA), 162 to 205 (NNVR…VRWE), 207 to 249 (NVRN…PKKG), 258 to 298 (TAGA…QRKV), and 320 to 358 (ISTQ…LNKV).

As to quaternary structure, interacts with PIH1D1; the interaction associates DNAAF10 with the R2TP complex. Interacts with several dynein axonemal assembly factors.

The protein localises to the dynein axonemal particle. Functionally, key assembly factor specifically required for the stability of axonemal dynein heavy chains in cytoplasm. The polypeptide is Dynein axonemal assembly factor 10 (dnaaf10) (Chlamydomonas reinhardtii (Chlamydomonas smithii)).